Reading from the N-terminus, the 193-residue chain is PBAN-type neuropeptides (193 aa).

Residues 1-19 (MYGAVLPGLFFIFISCVVA) form the signal peptide. Ile46 carries the post-translational modification Isoleucine amide. Leucine amide is present on residues Leu102 and Leu122. The disordered stretch occupies residues 124 to 158 (RRLADDTPATPADQEMYRPDPEQIDSRTKYFSPRL). The segment covering 138-151 (EMYRPDPEQIDSRT) has biased composition (basic and acidic residues). Leucine amide occurs at positions 158 and 168. The propeptide occupies 186–193 (STNKTQST).

This sequence belongs to the pyrokinin family. As to expression, expressed in the mandibular, maxillary and labial neuromeres of the male and female brain-subesophageal ganglions, in the corpora cardiaca and all around the corpora allata, and at a lower level in the brain near the calyx and pedunculus of the mushroom body (at protein level). Expressed in larvae and adult of both sexes (at protein level). Expressed in corpora cardiaca (CC), corpora allata (CA) and gnathal ganglion (GNG) (at protein level). Expression in CC and CA detected in most animals, in GNG in some (at protein level). In terms of tissue distribution, expression not detected in CC, CA, AL or GNG (at protein level). As to expression, expressed in corpora cardiaca (CC), corpora allata (CA), antennal lobe (AL) and gnathal ganglion (GNG) (at protein level). Expression in CC, CA and GNG detected in most animals, expression in AL detected in few (at protein level). Expressed in corpora cardiaca (CC), corpora allata (CA), antennal lobe (AL) and gnathal ganglion (GNG) (at protein level). Expression in CC, CA and GNG detected in all animals, expression in AL detected in some (at protein level). In terms of tissue distribution, expressed in corpora cardiaca (CC), corpora allata (CA), antennal lobe (AL) and gnathal ganglion (GNG) (at protein level). Expression in CC, CA and GNG detected in most animals, expression in AL detected in some animals (at protein level).

Its subcellular location is the secreted. Functionally, a hormone that controls sex pheromone production in female moths and pheromone responsiveness in male. This chain is PBAN-type neuropeptides, found in Agrotis ipsilon (Black cutworm moth).